The sequence spans 341 residues: Phosphate acyltransferase (341 aa).

Belongs to the PlsX family. As to quaternary structure, homodimer. Probably interacts with PlsY.

The protein localises to the cytoplasm. It catalyses the reaction a fatty acyl-[ACP] + phosphate = an acyl phosphate + holo-[ACP]. The protein operates within lipid metabolism; phospholipid metabolism. Catalyzes the reversible formation of acyl-phosphate (acyl-PO(4)) from acyl-[acyl-carrier-protein] (acyl-ACP). This enzyme utilizes acyl-ACP as fatty acyl donor, but not acyl-CoA. The sequence is that of Phosphate acyltransferase from Elusimicrobium minutum (strain Pei191).